The primary structure comprises 296 residues: tRNA dimethylallyltransferase (296 aa).

2 to 9 is an ATP binding site; that stretch reads GPTASGKT. Residue 4–9 coordinates substrate; that stretch reads TASGKT. Interaction with substrate tRNA regions lie at residues 27–30, 151–155, and 232–237; these read DSAL, QRLSR, and RCVGYR.

This sequence belongs to the IPP transferase family. As to quaternary structure, monomer. Mg(2+) is required as a cofactor.

It carries out the reaction adenosine(37) in tRNA + dimethylallyl diphosphate = N(6)-dimethylallyladenosine(37) in tRNA + diphosphate. Functionally, catalyzes the transfer of a dimethylallyl group onto the adenine at position 37 in tRNAs that read codons beginning with uridine, leading to the formation of N6-(dimethylallyl)adenosine (i(6)A). The sequence is that of tRNA dimethylallyltransferase from Shewanella sp. (strain MR-7).